Here is a 418-residue protein sequence, read N- to C-terminus: Serine hydroxymethyltransferase 2 (418 aa).

Residues Leu-121 and 125–127 (GHL) each bind (6S)-5,6,7,8-tetrahydrofolate. An N6-(pyridoxal phosphate)lysine modification is found at Lys-230. 355-357 (SPF) serves as a coordination point for (6S)-5,6,7,8-tetrahydrofolate.

It belongs to the SHMT family. Homodimer. It depends on pyridoxal 5'-phosphate as a cofactor.

Its subcellular location is the cytoplasm. It catalyses the reaction (6R)-5,10-methylene-5,6,7,8-tetrahydrofolate + glycine + H2O = (6S)-5,6,7,8-tetrahydrofolate + L-serine. It functions in the pathway one-carbon metabolism; tetrahydrofolate interconversion. It participates in amino-acid biosynthesis; glycine biosynthesis; glycine from L-serine: step 1/1. In terms of biological role, catalyzes the reversible interconversion of serine and glycine with tetrahydrofolate (THF) serving as the one-carbon carrier. This reaction serves as the major source of one-carbon groups required for the biosynthesis of purines, thymidylate, methionine, and other important biomolecules. Also exhibits THF-independent aldolase activity toward beta-hydroxyamino acids, producing glycine and aldehydes, via a retro-aldol mechanism. The polypeptide is Serine hydroxymethyltransferase 2 (Pseudomonas aeruginosa (strain ATCC 15692 / DSM 22644 / CIP 104116 / JCM 14847 / LMG 12228 / 1C / PRS 101 / PAO1)).